The sequence spans 385 residues: Signal transduction histidine-protein kinase/phosphatase DegS (385 aa).

Positions 31-141 (QIGEQSRQQY…IERSESLVSQ (111 aa)) form a coiled coil. At Ser76 the chain carries Phosphoserine. Residues 183–385 (RVSREIHDGP…FIMIKVPLSL (203 aa)) enclose the Histidine kinase domain. A Phosphohistidine; by autocatalysis modification is found at His189.

Autophosphorylated. Phosphorylated in vitro at Ser-76 by the serine/threonine-protein kinase YbdM, which stimulates the phosphate transfer to DegU.

Its subcellular location is the cytoplasm. The catalysed reaction is ATP + protein L-histidine = ADP + protein N-phospho-L-histidine.. Regulated via serine phosphorylation of its input domain. Phosphotransfer from DegS to DegU is stimulated by phosphorylation on Ser-76 and by DegQ. Its function is as follows. Member of the two-component regulatory system DegS/DegU, which plays an important role in the transition growth phase. Involved in the control of expression of different cellular functions, including production of degradative enzymes such as the neutral and alkaline proteases, flagellum formation and biofilm formation. Acts both as a protein kinase that undergoes autophosphorylation and subsequently transfers the phosphate to DegU, and as a protein phosphatase that dephosphorylates phospho-DegU. The protein is Signal transduction histidine-protein kinase/phosphatase DegS (degS) of Bacillus subtilis (strain 168).